The sequence spans 76 residues: Putative defensin-like protein 62 (76 aa).

Residues 1–26 form the signal peptide; the sequence is MDVTKTYVTIFVVAILTISVLIQIQQ. Cystine bridges form between Cys-30–Cys-71, Cys-34–Cys-57, Cys-43–Cys-69, and Cys-47–Cys-70.

The protein belongs to the DEFL family.

The protein resides in the secreted. This Arabidopsis thaliana (Mouse-ear cress) protein is Putative defensin-like protein 62.